Reading from the N-terminus, the 389-residue chain is Nicotinate phosphoribosyltransferase (389 aa).

His211 is subject to Phosphohistidine; by autocatalysis.

The protein belongs to the NAPRTase family. Transiently phosphorylated on a His residue during the reaction cycle. Phosphorylation strongly increases the affinity for substrates and increases the rate of nicotinate D-ribonucleotide production. Dephosphorylation regenerates the low-affinity form of the enzyme, leading to product release.

The catalysed reaction is nicotinate + 5-phospho-alpha-D-ribose 1-diphosphate + ATP + H2O = nicotinate beta-D-ribonucleotide + ADP + phosphate + diphosphate. It participates in cofactor biosynthesis; NAD(+) biosynthesis; nicotinate D-ribonucleotide from nicotinate: step 1/1. In terms of biological role, catalyzes the synthesis of beta-nicotinate D-ribonucleotide from nicotinate and 5-phospho-D-ribose 1-phosphate at the expense of ATP. This chain is Nicotinate phosphoribosyltransferase, found in Desulforapulum autotrophicum (strain ATCC 43914 / DSM 3382 / VKM B-1955 / HRM2) (Desulfobacterium autotrophicum).